The chain runs to 333 residues: Probable 4-hydroxyproline 2-epimerase (333 aa).

Cys-90 (proton acceptor) is an active-site residue. Substrate is bound by residues 91–92, His-223, and Asp-249; that span reads GH. Catalysis depends on Cys-253, which acts as the Proton donor. A substrate-binding site is contributed by 254 to 255; it reads GT.

The protein belongs to the proline racemase family.

It catalyses the reaction trans-4-hydroxy-L-proline = cis-4-hydroxy-D-proline. Functionally, likely catalyzes the epimerization of trans-4-hydroxy-L-proline (t4LHyp) to cis-4-hydroxy-D-proline (c4DHyp). May be involved in the degradation pathway that converts t4LHyp to alpha-ketoglutarate, which would allow R.meliloti to grow on t4LHyp as a sole carbon source. This is Probable 4-hydroxyproline 2-epimerase from Rhizobium meliloti (strain 1021) (Ensifer meliloti).